The following is a 366-amino-acid chain: Sigma54-dependent transcriptional activator SfnR (366 aa).

Residues 21 to 250 (QVFEDPRSQA…LENVIHHSLL (230 aa)) form the Sigma-54 factor interaction domain. ATP contacts are provided by residues 49-56 (GETGTGKE) and 112-121 (ANGGTLFLDE).

Its function is as follows. Involved in the dimethyl sulfide degradation pathway. Activates the expression of sfnG and sfnF. This Pseudomonas putida (Arthrobacter siderocapsulatus) protein is Sigma54-dependent transcriptional activator SfnR.